The sequence spans 249 residues: Hydantoin racemase (249 aa).

Belongs to the HyuE racemase family. Homohexamer.

It carries out the reaction a D-5-monosubstituted hydantoin = a L-5-monosubstituted hydantoin. The catalysed reaction is D-5-[2-(methylsulfanyl)ethyl]hydantoin = L-5-[2-(methysulfanyl)ethyl]hydantoin. It catalyses the reaction D-5-benzylhydantoin = L-5-benzylhydantoin. The enzyme catalyses D-5-isopropylhydantoin = L-5-isopropylhydantoin. It carries out the reaction D-5-isobutylhydantoin = L-5-isobutylhydantoin. Its activity is regulated as follows. Strongly inhibited by Cu(2+) and Zn(2+). Slightly stimulated by the addition of Mn(2+) or Co(2+), but also by metal-chelating agents such as EDTA or EGTA, indicating that the enzyme is not a metalloenzyme. In terms of biological role, involved in the asymmetric conversion of racemic 5-substituted hydantoins to the corresponding L-amino acids. Catalyzes the racemization via enolization of D- and L-5-monosubstituted hydantoins. Is able to racemize 5-substituted hydantoins having aromatic or aliphatic substituents such as 5-(2-methylthioethyl)hydantoin, 5-isopropylhydantoin, 5-isobutylhydantoin and 5-benzylhydantoin. The chain is Hydantoin racemase from Pseudomonas sp. (strain NS671).